We begin with the raw amino-acid sequence, 230 residues long: MKEERPIIALDFSSFEETKAFLDLFPAEEKLYVKIGMELYYAQGPDIVRYIKSLGHNVFLDLKLHDIPNTVRAAMAVLKELDIDMATVHAAGGVEMLKAAREGLGQGPTLIAVTQLTSTSEDQMRGDQNIQTSLLESVLHYSKGAAKAQLDGVVCSAQEVEAIKAVTPTGFTCLTPGIRPKGSNIGDQKRVMTPNQARRIGSDYIVVGRPITQAKDPVAAYQAIKAEWAG.

Substrate-binding positions include aspartate 11, lysine 34, 61 to 70, threonine 117, arginine 179, glutamine 188, glycine 208, and arginine 209; that span reads DLKLHDIPNT. Lysine 63 (proton donor) is an active-site residue.

It belongs to the OMP decarboxylase family. Type 1 subfamily. Homodimer.

It catalyses the reaction orotidine 5'-phosphate + H(+) = UMP + CO2. It functions in the pathway pyrimidine metabolism; UMP biosynthesis via de novo pathway; UMP from orotate: step 2/2. Its function is as follows. Catalyzes the decarboxylation of orotidine 5'-monophosphate (OMP) to uridine 5'-monophosphate (UMP). The protein is Orotidine 5'-phosphate decarboxylase of Streptococcus pyogenes serotype M6 (strain ATCC BAA-946 / MGAS10394).